The sequence spans 342 residues: Probable RNA methyltransferase PST_2231 (342 aa).

Residue E91 is the Proton acceptor of the active site. Residues 94–320 (LLPRDGLCVS…TKVRNSAGQD (227 aa)) form the Radical SAM core domain. A disulfide bond links C101 and C325. [4Fe-4S] cluster-binding residues include C108, C112, and C115. Residues 153–154 (GE), S183, 206–208 (SLH), and N282 each bind S-adenosyl-L-methionine. C325 acts as the S-methylcysteine intermediate in catalysis.

The protein belongs to the radical SAM superfamily. RlmN family. Requires [4Fe-4S] cluster as cofactor.

The protein resides in the cytoplasm. This Stutzerimonas stutzeri (strain A1501) (Pseudomonas stutzeri) protein is Probable RNA methyltransferase PST_2231.